The following is a 504-amino-acid chain: U3 snoRNP-associated protein-like YAO (504 aa).

The disordered stretch occupies residues 1 to 120 (MKYNNEKKKG…DDDDDEDDDE (120 aa)). Positions 20-33 (GSNERDPFFEEEPK) are enriched in basic and acidic residues. Acidic residues-rich tracts occupy residues 41 to 54 (DDDD…DAEE) and 70 to 81 (EVEDEDEFADET). Basic and acidic residues predominate over residues 89-106 (LAEEMLNRRREAMRRERE). A compositionally biased stretch (acidic residues) spans 107–120 (EADNDDDDDEDDDE). WD repeat units follow at residues 159–198 (KHRR…TDKY), 220–259 (NHSR…HVQA), 262–301 (GHRN…FITE), 304–342 (GHQG…RMIY), 344–382 (APAS…PVFV), 413–452 (SANS…IRPL), and 456–496 (PLTG…QNGV).

Belongs to the WD repeat RRP9 family. Expressed in tissues with active in cell division such as shoot apexes, root tips, lateral root primordia, embryos, endosperm, pollen grains and embryo sacs.

The protein localises to the nucleus. The protein resides in the nucleolus. Component of a nucleolar small nuclear ribonucleoprotein particle (snoRNP) thought to participate in the processing and modification of pre-ribosomal RNA. Essential for embryogenesis. Plays a critical role in embryo sac development and gametic cell fate. Required for the correct positioning of the first division plane of zygote. May function during early embryogenesis. The protein is U3 snoRNP-associated protein-like YAO of Arabidopsis thaliana (Mouse-ear cress).